The sequence spans 130 residues: MNIIQQYEAREIERLSGVRAVPEFIAGDTVRVGVRVVEGTRERVQSFEGVVIARSNKGLNSNFTVRKISNGEGVERVFPLYAPSIASIEVVRRGKVRRAKLYYLRGRSGKSARIAERPRDLPKADSMAAS.

This sequence belongs to the bacterial ribosomal protein bL19 family.

Its function is as follows. This protein is located at the 30S-50S ribosomal subunit interface and may play a role in the structure and function of the aminoacyl-tRNA binding site. The chain is Large ribosomal subunit protein bL19 from Gluconobacter oxydans (strain 621H) (Gluconobacter suboxydans).